A 644-amino-acid chain; its full sequence is Exoribonuclease 2 (644 aa).

In terms of domain architecture, RNB spans 189 to 516 (REDLTALDFV…NHRLLKAVIK (328 aa)). The region spanning 561-643 (DTRFAAEIVD…ETRSIIARPV (83 aa)) is the S1 motif domain.

Belongs to the RNR ribonuclease family. RNase II subfamily.

The protein resides in the cytoplasm. The catalysed reaction is Exonucleolytic cleavage in the 3'- to 5'-direction to yield nucleoside 5'-phosphates.. In terms of biological role, involved in mRNA degradation. Hydrolyzes single-stranded polyribonucleotides processively in the 3' to 5' direction. The sequence is that of Exoribonuclease 2 from Shigella boydii serotype 18 (strain CDC 3083-94 / BS512).